Reading from the N-terminus, the 720-residue chain is DNA replication licensing factor mcm7 (720 aa).

The segment at 183–210 adopts a C4-type zinc-finger fold; that stretch reads CDQCGAETYQPIQSPTFMPLIMCPSREC. An MCM domain is found at 331-537; sequence FYEKLAASIA…NDLRLAQHIT (207 aa). 8 residues coordinate ATP: tyrosine 344, glycine 383, alanine 385, lysine 386, serine 387, asparagine 488, arginine 513, and arginine 603. Residues 512-515 carry the Arginine finger motif; it reads SRFD.

This sequence belongs to the MCM family. As to quaternary structure, component of the mcm2-7 complex (RLF-M). The complex forms a toroidal hexameric ring with the proposed subunit order mcm2-mcm6-mcm4-mcm7-mcm3-mcm5. The heterodimer of mmcm3/mcm5 interacts with mcm4, mmcm6, mcm7 and weakly with mcm2. The N-terminus is required for interaction with mmcm3, though this interaction may not be direct, and remains in a complex with mmcm3 throughout the cell cycle. Begins to associate with zmcm6 at the neurula stage. Component of the replisome complex. Component of the CMG helicase complex, composed of the mcm2-7 complex, the GINS complex and cdc45. Post-translationally, ubiquitinated by traip when forks converge following formation of DNA interstrand cross-links. Short ubiquitin chains on mcm7 promote recruitment of DNA glycosylase neil3. If the interstrand cross-link cannot be cleaved by neil3, the ubiquitin chains continue to grow on mcm7, promoting the unloading of the CMG helicase complex by the vcp/p97 ATPase.

Its subcellular location is the nucleus. It localises to the chromosome. It carries out the reaction ATP + H2O = ADP + phosphate + H(+). Its function is as follows. Acts as a component of the mcm2-7 complex (mcm complex) which is the putative replicative helicase essential for 'once per cell cycle' DNA replication initiation and elongation in eukaryotic cells. The active ATPase sites in the mcm2-7 ring are formed through the interaction surfaces of two neighboring subunits such that a critical structure of a conserved arginine finger motif is provided in trans relative to the ATP-binding site of the Walker A box of the adjacent subunit. The six ATPase active sites, however, are likely to contribute differentially to the complex helicase activity. The existence of maternal and zygotic forms of mcm3 and mcm6 suggests that specific forms of mcm2-7 complexes may be used during different stages of development. This chain is DNA replication licensing factor mcm7, found in Xenopus tropicalis (Western clawed frog).